Consider the following 59-residue polypeptide: Ribosome biogenesis protein Nop10 (59 aa).

The protein belongs to the NOP10 family.

In terms of biological role, involved in ribosome biogenesis; more specifically in 18S rRNA pseudouridylation and in cleavage of pre-rRNA. The polypeptide is Ribosome biogenesis protein Nop10 (Thermococcus gammatolerans (strain DSM 15229 / JCM 11827 / EJ3)).